The chain runs to 142 residues: uncharacterized protein (142 aa).

The tract at residues 70–94 is disordered; sequence PKSVSNSKKKKEKAEKGLLRPTTKP. The span at 81-94 shows a compositional bias: basic and acidic residues; the sequence is EKAEKGLLRPTTKP.

This is an uncharacterized protein from Bacillus subtilis (strain 168).